The chain runs to 286 residues: ATP-binding protein ChvD (286 aa).

One can recognise an ABC transporter domain in the interval Lys-21–Asn-85.

This sequence belongs to the ABC transporter superfamily.

Functionally, the induction of virG by growth under acidic conditions and by phosphate starvation, in the absence of plant inducers, is influenced by ChvD. In Rhizobium radiobacter (Agrobacterium tumefaciens), this protein is ATP-binding protein ChvD (chvD).